The following is a 345-amino-acid chain: Phosphoribosylformylglycinamidine cyclo-ligase (345 aa).

This sequence belongs to the AIR synthase family.

It localises to the cytoplasm. It carries out the reaction 2-formamido-N(1)-(5-O-phospho-beta-D-ribosyl)acetamidine + ATP = 5-amino-1-(5-phospho-beta-D-ribosyl)imidazole + ADP + phosphate + H(+). It participates in purine metabolism; IMP biosynthesis via de novo pathway; 5-amino-1-(5-phospho-D-ribosyl)imidazole from N(2)-formyl-N(1)-(5-phospho-D-ribosyl)glycinamide: step 2/2. This chain is Phosphoribosylformylglycinamidine cyclo-ligase, found in Salmonella choleraesuis (strain SC-B67).